The sequence spans 212 residues: Uridine kinase (212 aa).

13–20 (GGSGSGKT) is a binding site for ATP.

This sequence belongs to the uridine kinase family.

Its subcellular location is the cytoplasm. The catalysed reaction is uridine + ATP = UMP + ADP + H(+). It carries out the reaction cytidine + ATP = CMP + ADP + H(+). Its pathway is pyrimidine metabolism; CTP biosynthesis via salvage pathway; CTP from cytidine: step 1/3. The protein operates within pyrimidine metabolism; UMP biosynthesis via salvage pathway; UMP from uridine: step 1/1. The chain is Uridine kinase from Bacillus cytotoxicus (strain DSM 22905 / CIP 110041 / 391-98 / NVH 391-98).